The following is a 260-amino-acid chain: DNA-directed RNA polymerase subunit Rpo3 (260 aa).

It belongs to the archaeal Rpo3/eukaryotic RPB3 RNA polymerase subunit family. Part of the RNA polymerase complex.

The protein resides in the cytoplasm. The catalysed reaction is RNA(n) + a ribonucleoside 5'-triphosphate = RNA(n+1) + diphosphate. DNA-dependent RNA polymerase (RNAP) catalyzes the transcription of DNA into RNA using the four ribonucleoside triphosphates as substrates. In Pyrobaculum aerophilum (strain ATCC 51768 / DSM 7523 / JCM 9630 / CIP 104966 / NBRC 100827 / IM2), this protein is DNA-directed RNA polymerase subunit Rpo3.